The following is a 145-amino-acid chain: Basic phospholipase A2 GL1-1 (145 aa).

The first 21 residues, 1 to 21 (MYPAHLLVLLAVCVSLLGASA), serve as a signal peptide directing secretion. A propeptide spanning residues 22-27 (IPPLPL) is cleaved from the precursor. Disulfide bonds link Cys38–Cys98, Cys54–Cys144, Cys56–Cys72, Cys71–Cys125, Cys78–Cys118, Cys87–Cys111, and Cys105–Cys116. Residues Tyr55, Gly57, and Gly59 each coordinate Ca(2+). Residue His75 is part of the active site. Position 76 (Asp76) interacts with Ca(2+). Asp119 is an active-site residue.

Belongs to the phospholipase A2 family. Group I subfamily. D49 sub-subfamily. Ca(2+) serves as cofactor. As to expression, expressed by the venom gland.

The protein localises to the secreted. The enzyme catalyses a 1,2-diacyl-sn-glycero-3-phosphocholine + H2O = a 1-acyl-sn-glycero-3-phosphocholine + a fatty acid + H(+). Functionally, PLA2 catalyzes the calcium-dependent hydrolysis of the 2-acyl groups in 3-sn-phosphoglycerides. The chain is Basic phospholipase A2 GL1-1 from Laticauda semifasciata (Black-banded sea krait).